The sequence spans 159 residues: C-type lectin BJcuL (159 aa).

Residues Met1–Gly24 form the signal peptide. 4 disulfide bridges follow: Cys27-Cys38, Cys55-Cys155, Cys62-Cys157, and Cys130-Cys147. In terms of domain architecture, C-type lectin spans Met34–Gln156. Residues Gln120, Asp122, Glu128, Asn143, and Asp144 each contribute to the Ca(2+) site. Residues Gln120 to Asp122 carry the Galactose-binding motif.

It belongs to the true venom lectin family. In terms of assembly, homodecamer of disulfide-linked dimers arranged in two 5-fold symmetric pentamers. Binds the gentamicin group of aminoglycoside antibiotics at the dimeric interface near the intermolecular disulfide bond. In terms of tissue distribution, expressed by the venom gland.

Its subcellular location is the secreted. Hemagglutination activity is inhibited by lactose (MIC=2.5 mM), galactose (MIC=10 mM), and raffinose. Is very weakly or not inhibited by gentamicin, kanamycin, glucose and sucrose. In terms of biological role, galactose-binding lectin which recognizes specific carbohydrate structures and agglutinates a variety of animal cells by binding to cell-surface glycoproteins and glycolipids. Calcium-dependent lectin. Also binds lactose and raffinose. Shows high hemagglutinating activity on mammalian erythrocytes. It also involved in immunological functions, since it is able of inducing potent neutrophil activation. In vivo, it causes edema and increases vascular permeability after injection into mouse hind paws (10-100 ug/paw). In anesthetized rats, it decreases the blood pressure by approximately 15%, with a rapid return to the resting level. Is an effective inhibitor of cell growth in some cancer cell lines, especially against renal and pancreatic cancer cell lines, human breast and ovarian carcinoma, glioblastoma and a bovine brain microvascular endothelial cell line. The chain is C-type lectin BJcuL from Bothrops jararacussu (Jararacussu).